Reading from the N-terminus, the 416-residue chain is Solute carrier family 25 member 46 (416 aa).

A compositionally biased stretch (basic and acidic residues) spans 1–13; it reads MQPRRPDRFDGLE. Positions 1–91 are disordered; it reads MQPRRPDRFD…GEESSSSSSG (91 aa). Residues 37 to 49 are compositionally biased toward polar residues; that stretch reads SFSSSGDLSQHWV. A compositionally biased stretch (low complexity) spans 82-91; it reads GEESSSSSSG. One copy of the Solcar 1 repeat lies at 94–185; that stretch reads HLNRFAGFGI…GMLSEFTHLP (92 aa). 6 helical membrane passes run 101–121, 161–181, 197–217, 256–276, 312–332, and 381–401; these read FGIGLASLFTENVLAHPCIVL, MGSTFIVQGISLGAEGMLSEF, IGGHLLLKGLVYVIVTPFYSA, LLPLLVLTFPTVLHGILHYII, FPELIANFAASLCADVLLYPL, and LGFYKGFGAVVVQYTLHAIVL. One copy of the Solcar 2 repeat lies at 309-414; it reads EDYFPELIAN…KIIYSSVVQT (106 aa).

It belongs to the mitochondrial carrier (TC 2.A.29) family.

It is found in the mitochondrion outer membrane. May play a role in mitochondrial dynamics by controlling mitochondrial membrane fission. The protein is Solute carrier family 25 member 46 (slc25a46) of Xenopus tropicalis (Western clawed frog).